A 221-amino-acid polypeptide reads, in one-letter code: Orotate phosphoribosyltransferase (221 aa).

Residue Lys26 participates in 5-phospho-alpha-D-ribose 1-diphosphate binding. 34 to 35 (FF) provides a ligand contact to orotate. Residues 72–73 (YK), Arg99, Lys100, Lys103, His105, and 124–132 (DDVITAGTA) each bind 5-phospho-alpha-D-ribose 1-diphosphate. Orotate contacts are provided by Thr128 and Arg156.

It belongs to the purine/pyrimidine phosphoribosyltransferase family. PyrE subfamily. Homodimer. The cofactor is Mg(2+).

It catalyses the reaction orotidine 5'-phosphate + diphosphate = orotate + 5-phospho-alpha-D-ribose 1-diphosphate. It functions in the pathway pyrimidine metabolism; UMP biosynthesis via de novo pathway; UMP from orotate: step 1/2. Catalyzes the transfer of a ribosyl phosphate group from 5-phosphoribose 1-diphosphate to orotate, leading to the formation of orotidine monophosphate (OMP). The sequence is that of Orotate phosphoribosyltransferase from Colwellia psychrerythraea (strain 34H / ATCC BAA-681) (Vibrio psychroerythus).